A 561-amino-acid polypeptide reads, in one-letter code: Potassium-transporting ATPase potassium-binding subunit (561 aa).

The next 11 helical transmembrane spans lie at 5–25 (LAAG…YVPL), 60–80 (CGYA…LYVL), 86–106 (VLPL…NTAV), 131–151 (GLAV…VALI), 177–197 (ILLP…VIQS), 247–267 (PTPL…VALT), 281–301 (LTVL…TTAA), 376–396 (GLYG…LLVG), 415–435 (ALAV…TVVL), 489–509 (LGLC…ALAG), and 531–551 (FAGL…FPVL).

Belongs to the KdpA family. As to quaternary structure, the system is composed of three essential subunits: KdpA, KdpB and KdpC.

The protein localises to the cell membrane. Its function is as follows. Part of the high-affinity ATP-driven potassium transport (or Kdp) system, which catalyzes the hydrolysis of ATP coupled with the electrogenic transport of potassium into the cytoplasm. This subunit binds the extracellular potassium ions and delivers the ions to the membrane domain of KdpB through an intramembrane tunnel. This Nocardia farcinica (strain IFM 10152) protein is Potassium-transporting ATPase potassium-binding subunit.